Here is a 193-residue protein sequence, read N- to C-terminus: NADH-quinone oxidoreductase subunit B (193 aa).

[4Fe-4S] cluster contacts are provided by Cys-72, Cys-73, Cys-137, and Cys-167.

Belongs to the complex I 20 kDa subunit family. NDH-1 is composed of 14 different subunits. Subunits NuoB, C, D, E, F, and G constitute the peripheral sector of the complex. [4Fe-4S] cluster is required as a cofactor.

The protein localises to the cell inner membrane. It carries out the reaction a quinone + NADH + 5 H(+)(in) = a quinol + NAD(+) + 4 H(+)(out). Its function is as follows. NDH-1 shuttles electrons from NADH, via FMN and iron-sulfur (Fe-S) centers, to quinones in the respiratory chain. Couples the redox reaction to proton translocation (for every two electrons transferred, four hydrogen ions are translocated across the cytoplasmic membrane), and thus conserves the redox energy in a proton gradient. The protein is NADH-quinone oxidoreductase subunit B of Brucella anthropi (strain ATCC 49188 / DSM 6882 / CCUG 24695 / JCM 21032 / LMG 3331 / NBRC 15819 / NCTC 12168 / Alc 37) (Ochrobactrum anthropi).